The following is a 687-amino-acid chain: MTTQTLLIELLTEELPPKALNNLGNHFAASVAEGLEKAQLVDGAAEFTAYASPRRLAVQVKNVKAVQADQKIVKKGPAVANAVKDGTPTKALEGFARGAGAKIEDLTIIHDGRQDVYAYEYVQTGRPLGGLLEDIINQAVKKLPIPKVMRWGSSTFTFVRPVHGLIVLHGGDVVNVSVLGLQSGNQTLGHRFLSDGEIIIENADSYAAQMRGQGKVVASFAGRKAAIQTALEGQARRLNATVAADEALLDEVTALVEWPVVLEAGFEEHFLAMPQECLILTMQQNQKYFPLLDQNGKLMNRFLLVSNLQTEDPSHIIRGNERVLRARLSDAEFFYKQDQKATLESRLPKLANVVYHNKIGSQAERIERLQSIAAHIAKALGADAAAAGRAARLAKADLVTEMVGEFPELQGTMGKYYARLDGETEEIAEAIEQHYQPRFAGDKLPESKIAAAVALADKLETLVGIWGIGLIPTGDKDPYALRRAALGILRMLMQYGLDVNELIQTAFDSFPQGLLNEKTPSETADFMQARLAVLLQNDYPQDIVAAVLAKQPRRLDDLTAKLQAVAVFKQLPEAAALAAANKRVQNLLKKADAALGAVNESLLQQDEEKALYAAAQGLQPKIAAAVAEGNFRTALSELASVKPQVDAFFDGVMVMAEDAAVKQNRLNLLNRLAEQMNAVADIALLGE.

It belongs to the class-II aminoacyl-tRNA synthetase family. In terms of assembly, tetramer of two alpha and two beta subunits.

The protein resides in the cytoplasm. It catalyses the reaction tRNA(Gly) + glycine + ATP = glycyl-tRNA(Gly) + AMP + diphosphate. This Neisseria gonorrhoeae (strain NCCP11945) protein is Glycine--tRNA ligase beta subunit.